A 345-amino-acid chain; its full sequence is Ribosomal large subunit pseudouridine synthase B (345 aa).

Over residues 1–10 (MKFTKPNSRQ) the composition is skewed to polar residues. Residues 1-60 (MKFTKPNSRQNKPHVEQKTSRRSTNANAVASKNVKKVTEAQPKSVKASTHSVKPTVKNPL) form a disordered region. In terms of domain architecture, S4 RNA-binding spans 64 to 136 (EKLQKVLARA…VCRVLMYYKP (73 aa)). Aspartate 171 serves as the catalytic Nucleophile.

It belongs to the pseudouridine synthase RsuA family.

It carries out the reaction uridine(2605) in 23S rRNA = pseudouridine(2605) in 23S rRNA. Functionally, responsible for synthesis of pseudouridine from uracil-2605 in 23S ribosomal RNA. The sequence is that of Ribosomal large subunit pseudouridine synthase B (rluB) from Pasteurella multocida (strain Pm70).